A 151-amino-acid chain; its full sequence is Deoxyuridine 5'-triphosphate nucleotidohydrolase (151 aa).

Residues 70 to 72, N83, 87 to 89, and M97 each bind substrate; these read RSG and LID.

Belongs to the dUTPase family. Mg(2+) serves as cofactor.

It carries out the reaction dUTP + H2O = dUMP + diphosphate + H(+). It functions in the pathway pyrimidine metabolism; dUMP biosynthesis; dUMP from dCTP (dUTP route): step 2/2. In terms of biological role, this enzyme is involved in nucleotide metabolism: it produces dUMP, the immediate precursor of thymidine nucleotides and it decreases the intracellular concentration of dUTP so that uracil cannot be incorporated into DNA. The chain is Deoxyuridine 5'-triphosphate nucleotidohydrolase from Pseudomonas syringae pv. tomato (strain ATCC BAA-871 / DC3000).